Consider the following 500-residue polypeptide: L-arabinose isomerase (500 aa).

Mn(2+) is bound by residues glutamate 306, glutamate 333, histidine 350, and histidine 450.

It belongs to the arabinose isomerase family. In terms of assembly, homohexamer. The cofactor is Mn(2+).

It carries out the reaction beta-L-arabinopyranose = L-ribulose. It participates in carbohydrate degradation; L-arabinose degradation via L-ribulose; D-xylulose 5-phosphate from L-arabinose (bacterial route): step 1/3. Its function is as follows. Catalyzes the conversion of L-arabinose to L-ribulose. This chain is L-arabinose isomerase, found in Escherichia coli O17:K52:H18 (strain UMN026 / ExPEC).